We begin with the raw amino-acid sequence, 438 residues long: Tol-Pal system protein TolB (438 aa).

The signal sequence occupies residues 1-35 (MITMKNILKLRATGLLLLLLLMISVLGNGIGQAMA).

This sequence belongs to the TolB family. In terms of assembly, the Tol-Pal system is composed of five core proteins: the inner membrane proteins TolA, TolQ and TolR, the periplasmic protein TolB and the outer membrane protein Pal. They form a network linking the inner and outer membranes and the peptidoglycan layer.

The protein resides in the periplasm. Functionally, part of the Tol-Pal system, which plays a role in outer membrane invagination during cell division and is important for maintaining outer membrane integrity. The protein is Tol-Pal system protein TolB of Desulfotalea psychrophila (strain LSv54 / DSM 12343).